A 265-amino-acid polypeptide reads, in one-letter code: Cytochrome c oxidase subunit 3 (265 aa).

Helical transmembrane passes span 16-36 (PWPISGSLGALATTVGGVMYM), 41-61 (GGATLLSLGLIFILYTMFVWW), 81-101 (GPRYGSISFIVSEVMFLFAFF), 137-157 (TPILLSSGAAVTWAHHAILAG), 162-182 (AVYALVATVSLALVFTGFQGM), 200-220 (FFLATGFHGFHVIIGTLFLII), and 245-265 (WHFVDVVRLFPFVSIYWWGGI).

The protein belongs to the cytochrome c oxidase subunit 3 family. In terms of assembly, component of the cytochrome c oxidase (complex IV, CIV), a multisubunit enzyme composed of a catalytic core of 3 subunits and several supernumerary subunits. The complex exists as a monomer or a dimer and forms supercomplexes (SCs) in the inner mitochondrial membrane with ubiquinol-cytochrome c oxidoreductase (cytochrome b-c1 complex, complex III, CIII).

Its subcellular location is the mitochondrion inner membrane. The enzyme catalyses 4 Fe(II)-[cytochrome c] + O2 + 8 H(+)(in) = 4 Fe(III)-[cytochrome c] + 2 H2O + 4 H(+)(out). Functionally, component of the cytochrome c oxidase, the last enzyme in the mitochondrial electron transport chain which drives oxidative phosphorylation. The respiratory chain contains 3 multisubunit complexes succinate dehydrogenase (complex II, CII), ubiquinol-cytochrome c oxidoreductase (cytochrome b-c1 complex, complex III, CIII) and cytochrome c oxidase (complex IV, CIV), that cooperate to transfer electrons derived from NADH and succinate to molecular oxygen, creating an electrochemical gradient over the inner membrane that drives transmembrane transport and the ATP synthase. Cytochrome c oxidase is the component of the respiratory chain that catalyzes the reduction of oxygen to water. Electrons originating from reduced cytochrome c in the intermembrane space (IMS) are transferred via the dinuclear copper A center (CU(A)) of subunit 2 and heme A of subunit 1 to the active site in subunit 1, a binuclear center (BNC) formed by heme A3 and copper B (CU(B)). The BNC reduces molecular oxygen to 2 water molecules using 4 electrons from cytochrome c in the IMS and 4 protons from the mitochondrial matrix. This Vicia faba (Broad bean) protein is Cytochrome c oxidase subunit 3 (COX3).